The chain runs to 55 residues: Large ribosomal subunit protein bL32c (55 aa).

It belongs to the bacterial ribosomal protein bL32 family.

The protein localises to the plastid. The protein resides in the chloroplast. The sequence is that of Large ribosomal subunit protein bL32c from Nicotiana sylvestris (Wood tobacco).